A 281-amino-acid chain; its full sequence is Large ribosomal subunit protein mL46 (281 aa).

The transit peptide at 1 to 19 (MKVNLMLKRGLATATATAS) directs the protein to the mitochondrion. A compositionally biased stretch (basic and acidic residues) spans 106 to 118 (RERSTKQEVKLSD). The interval 106 to 141 (RERSTKQEVKLSDDSTVAFSNNQKEQSKDDVNRPVI) is disordered. The segment covering 119–129 (DSTVAFSNNQK) has biased composition (polar residues).

This sequence belongs to the mitochondrion-specific ribosomal protein mL46 family. In terms of assembly, component of the mitochondrial large ribosomal subunit (mt-LSU). Mature yeast 74S mitochondrial ribosomes consist of a small (37S) and a large (54S) subunit. The 37S small subunit contains a 15S ribosomal RNA (15S mt-rRNA) and 34 different proteins. The 54S large subunit contains a 21S rRNA (21S mt-rRNA) and 46 different proteins.

It is found in the mitochondrion. Its function is as follows. Component of the mitochondrial ribosome (mitoribosome), a dedicated translation machinery responsible for the synthesis of mitochondrial genome-encoded proteins, including at least some of the essential transmembrane subunits of the mitochondrial respiratory chain. The mitoribosomes are attached to the mitochondrial inner membrane and translation products are cotranslationally integrated into the membrane. This chain is Large ribosomal subunit protein mL46 (MRPL17), found in Saccharomyces cerevisiae (strain ATCC 204508 / S288c) (Baker's yeast).